The primary structure comprises 378 residues: Erythronate-4-phosphate dehydrogenase (378 aa).

Substrate is bound by residues serine 45 and threonine 66. NAD(+) is bound by residues aspartate 142 and threonine 169. Arginine 202 is an active-site residue. Aspartate 226 lines the NAD(+) pocket. Glutamate 231 is an active-site residue. The active-site Proton donor is the histidine 248. NAD(+) is bound at residue glycine 251. Position 252 (tyrosine 252) interacts with substrate.

The protein belongs to the D-isomer specific 2-hydroxyacid dehydrogenase family. PdxB subfamily. In terms of assembly, homodimer.

The protein localises to the cytoplasm. The enzyme catalyses 4-phospho-D-erythronate + NAD(+) = (R)-3-hydroxy-2-oxo-4-phosphooxybutanoate + NADH + H(+). The protein operates within cofactor biosynthesis; pyridoxine 5'-phosphate biosynthesis; pyridoxine 5'-phosphate from D-erythrose 4-phosphate: step 2/5. Catalyzes the oxidation of erythronate-4-phosphate to 3-hydroxy-2-oxo-4-phosphonooxybutanoate. The protein is Erythronate-4-phosphate dehydrogenase of Cellvibrio japonicus (strain Ueda107) (Pseudomonas fluorescens subsp. cellulosa).